A 740-amino-acid polypeptide reads, in one-letter code: MSSAVRVVEKQLDEILAIARNPAQIRNAGTLAHVDHGKTTTSDSLLMGAGLLSPKVAGKALAMDYVPIEQLRQMTVKAANISLYFEYGGKPYLINFVDTPGHVDFTGHVTRSLRVMDGGLVVVDAVEGVMTQTETVVRQALEEYVRPVLFINKIDRLIKELRLSPQEIQQRILTIVKDFNALIDMFAPPEFKDKWKVDPGKGQMAMGSALHKWGITIPMAQKAGIKFSNIVDAYEKGYVDQLAQEFPLYKTLLTMIIEHVPPPNVAQKYRIPRLWRGDLNSEIGKALLEADPNGPTVIAVSKVNKDPHAGLIATGRVFSGTIREGDEIYIIGRKMKKKVLQTYIYMGPSRIIVPYMPAGNIVALMGVDEARAGDTLVDPRLSEIPPFEKMRYISEPVVTVAIEPKNPAELARLVEALKDLVIEDPTLDLKIDQETGQILLSGVGTLHLEIATWLLKERTKTEFTVSPPLIRFRETVRERSQVWEGKSPNKHNRLYFYVEPLDETTIELIATREITEDQDPRERAKILREKAGWDADEARGIWAIDDRFFNLIVDRTSGIQYLREIRDYIVQGFRWATEAGPLAQEPMRGLKVVLTDAVVHEDPAHRGPAQIMPATKNAIFAAVLSARPTILEPLMKLDIKVAPDYIGAVTSVLNKHRGKILDMTQQEYMAYLRAELPVLESFTISDELRAAAAGKIFWSMQFSRWAPMPESILADMVKQLRKKKGLKEEIPKPTDFVEAF.

One can recognise a tr-type G domain in the interval 23–264 (AQIRNAGTLA…MIIEHVPPPN (242 aa)). GTP contacts are provided by residues 32-39 (AHVDHGKT), 98-102 (DTPGH), and 152-155 (NKID). Position 605 is a diphthamide (His605).

This sequence belongs to the TRAFAC class translation factor GTPase superfamily. Classic translation factor GTPase family. EF-G/EF-2 subfamily.

The protein resides in the cytoplasm. In terms of biological role, catalyzes the GTP-dependent ribosomal translocation step during translation elongation. During this step, the ribosome changes from the pre-translocational (PRE) to the post-translocational (POST) state as the newly formed A-site-bound peptidyl-tRNA and P-site-bound deacylated tRNA move to the P and E sites, respectively. Catalyzes the coordinated movement of the two tRNA molecules, the mRNA and conformational changes in the ribosome. The polypeptide is Elongation factor 2 (Pyrobaculum neutrophilum (strain DSM 2338 / JCM 9278 / NBRC 100436 / V24Sta) (Thermoproteus neutrophilus)).